The chain runs to 447 residues: UDP-glycosyltransferase 76B1 (447 aa).

UDP-alpha-D-glucose contacts are provided by residues Ser269, 327-328, 345-353, and 367-370; these read WA, HCGWNSTLE, and FGDQ.

This sequence belongs to the UDP-glycosyltransferase family. As to expression, expressed in roots, leaves, hydathodes, sepals and style.

In terms of biological role, glycosylates the amino acid-related molecules isoleucic acid (2-hydroxy-3-methylpentanoic acid) and valic acid (2-hydroxy-3-methylbutyric acid). Acts as a negative regulator of salicylic acid (SA)-dependent plant defense in the absence of pathogens and promotes the jasmonate (JA) response. Negatively influences the onset of senescence. This chain is UDP-glycosyltransferase 76B1, found in Arabidopsis thaliana (Mouse-ear cress).